A 372-amino-acid chain; its full sequence is MTSIEPTHTGKKVIVGMSGGVDSSVSAYLLMQQGYQVEGLFMKNWEEDDNNEYCAAAEDLKDAQAVCDKLGIKLHTVNFAAEYWDNVFEYFLAEYKAGRTPNPDIMCNKEIKFKAFLEFADEILDADYIAMGHYVRRRDNSDGSTQMLRGVDGNKDQSYFLYTLSHEQVARSLFPVGELEKHQVREIAKEMGLITHDKKDSTGICFIGERKFTEFLRTYLPAQPGNIETPEGEVIGTHQGLMYHTLGQRKGLGIGGMKNSNDDPWYVVDKDLERNVLIVGQGGHHPRLMSTGMTVNQLHWVDRTGPVDGCHITVKTRYRQQDVPCTLTYTDEHTLRVVFDEPVAAVTPGQSAVFYDGEVCLGGGIIDQLIRG.

Residues 16–23 and M42 each bind ATP; that span reads GMSGGVDS. An interaction with target base in tRNA region spans residues 102-104; that stretch reads NPD. The active-site Nucleophile is the C107. C107 and C205 form a disulfide bridge. G132 contributes to the ATP binding site. Residues 155-157 form an interaction with tRNA region; that stretch reads KDQ. C205 (cysteine persulfide intermediate) is an active-site residue. Residues 317-318 are interaction with tRNA; that stretch reads RY.

This sequence belongs to the MnmA/TRMU family.

The protein resides in the cytoplasm. It carries out the reaction S-sulfanyl-L-cysteinyl-[protein] + uridine(34) in tRNA + AH2 + ATP = 2-thiouridine(34) in tRNA + L-cysteinyl-[protein] + A + AMP + diphosphate + H(+). Its function is as follows. Catalyzes the 2-thiolation of uridine at the wobble position (U34) of tRNA, leading to the formation of s(2)U34. The protein is tRNA-specific 2-thiouridylase MnmA of Shewanella putrefaciens (strain CN-32 / ATCC BAA-453).